We begin with the raw amino-acid sequence, 610 residues long: UvrABC system protein C (610 aa).

In terms of domain architecture, GIY-YIG spans Ser16–Val94. The UVR domain occupies Asp204–Val239.

Belongs to the UvrC family. Interacts with UvrB in an incision complex.

The protein resides in the cytoplasm. Functionally, the UvrABC repair system catalyzes the recognition and processing of DNA lesions. UvrC both incises the 5' and 3' sides of the lesion. The N-terminal half is responsible for the 3' incision and the C-terminal half is responsible for the 5' incision. The sequence is that of UvrABC system protein C from Salmonella gallinarum (strain 287/91 / NCTC 13346).